Consider the following 975-residue polypeptide: Aminopeptidase N (975 aa).

Topologically, residues 1-11 (MAKGFYISKAL) are cytoplasmic. The helical; Signal-anchor for type II membrane protein transmembrane segment at 12–32 (GILAIVLGIAAVSTIIALSVV) threads the bilayer. The cytosolic Ser/Thr-rich junction stretch occupies residues 33–74 (YAQEKNKNAESSPVSSPVSSPVSSPVSPTNPSTTAATTLAQS). The Extracellular portion of the chain corresponds to 33 to 975 (YAQEKNKNAE…VLQWFRENSQ (943 aa)). A disordered region spans residues 41-68 (AESSPVSSPVSSPVSSPVSPTNPSTTAA). The span at 43-59 (SSPVSSPVSSPVSSPVS) shows a compositional bias: low complexity. Residues 75 to 975 (KPWNHYRLPK…VLQWFRENSQ (901 aa)) are metalloprotease. Asn-134 carries an N-linked (GlcNAc...) asparagine glycan. Tyr-182 bears the Sulfotyrosine mark. Residues Asn-240 and Asn-271 are each glycosylated (N-linked (GlcNAc...) asparagine). 358–362 (GAMEN) lines the substrate pocket. His-394 contacts Zn(2+). Residue Glu-395 is the Proton acceptor of the active site. His-398 and Glu-417 together coordinate Zn(2+). Sulfotyrosine is present on residues Tyr-425 and Tyr-430. N-linked (GlcNAc...) asparagine glycans are attached at residues Asn-533, Asn-580, Asn-633, Asn-689, and Asn-747. 2 disulfides stabilise this stretch: Cys-769-Cys-776 and Cys-806-Cys-842. N-linked (GlcNAc...) asparagine glycosylation occurs at Asn-826.

It belongs to the peptidase M1 family. (Microbial infection) Interacts with CCoV spike glycoprotein. In terms of assembly, homodimer. Interacts with SLC6A19. Zn(2+) is required as a cofactor. Post-translationally, sulfated. In terms of processing, N- and O-glycosylated. May undergo proteolysis and give rise to a soluble form.

The protein resides in the cell membrane. The catalysed reaction is Release of an N-terminal amino acid, Xaa-|-Yaa- from a peptide, amide or arylamide. Xaa is preferably Ala, but may be most amino acids including Pro (slow action). When a terminal hydrophobic residue is followed by a prolyl residue, the two may be released as an intact Xaa-Pro dipeptide.. Functionally, broad specificity aminopeptidase which plays a role in the final digestion of peptides generated from hydrolysis of proteins by gastric and pancreatic proteases. Also involved in the processing of various peptides including peptide hormones, such as angiotensin III and IV, neuropeptides, and chemokines. May also be involved the cleavage of peptides bound to major histocompatibility complex class II molecules of antigen presenting cells. May have a role in angiogenesis and promote cholesterol crystallization. May have a role in amino acid transport by acting as binding partner of amino acid transporter SLC6A19 and regulating its activity. Its function is as follows. (Microbial infection) Probable receptor for canine coronavirus (CCoV). This Canis lupus familiaris (Dog) protein is Aminopeptidase N (ANPEP).